A 489-amino-acid polypeptide reads, in one-letter code: MSGQFTISDLNRLYQRIIYRNERLKKFLKDPALSSSFEMKYAQRLLQEAVDNLIQNGKSGVVPEKDARGRLLKSLSDILKGKQGRFRQYLLGKRVDYSGRSVIVVGPRLRLHECGIPKEMALVLYSPFLIKRILNEKLADTYLSAKKLIRTNPLLVSQLLREIMKSCPVLLNRAPTLHRLGFQAFQPKLVDGKAILLHPLVCPAFNADFDGDQMAVHVPITFEARAEAWKLMLARNNLLSPATGEPLILPSQDMVLGCYYLTTNCAEKWSKLKKGSGMYFHNIHEVLKAYNQHLIHLHAVIWVNIQGHLETANNIEQPLEIRIPLNQKYFYSQKGSYTALAGRPWQLLLREDAYSSNGLIAEANAGNLPQINVAEGEVNKNILDLRYLNLNYMEIYSKTHNLLNVNHSTLVAQRGQIKDNIHLPQLTTQIIRTTPGKILFNIIVKNAIEKRPKLLSKSNFKGGFIKNKLVNAIDQEIDNYFIRKNTALS.

Mg(2+)-binding residues include Asp208, Asp210, and Asp212.

The protein belongs to the RNA polymerase beta' chain family. RpoC1 subfamily. In terms of assembly, in plastids the minimal PEP RNA polymerase catalytic core is composed of four subunits: alpha, beta, beta', and beta''. When a (nuclear-encoded) sigma factor is associated with the core the holoenzyme is formed, which can initiate transcription. Mg(2+) serves as cofactor.

The protein resides in the plastid. It is found in the chloroplast. The enzyme catalyses RNA(n) + a ribonucleoside 5'-triphosphate = RNA(n+1) + diphosphate. Functionally, DNA-dependent RNA polymerase catalyzes the transcription of DNA into RNA using the four ribonucleoside triphosphates as substrates. This Chlamydomonas reinhardtii (Chlamydomonas smithii) protein is DNA-directed RNA polymerase subunit beta' C-terminal section (rpoC1B).